We begin with the raw amino-acid sequence, 131 residues long: Bacteriohemerythrin (131 aa).

Positions 22, 58, 62, 77, 81, 117, and 122 each coordinate Fe cation.

Belongs to the hemerythrin family. As to quaternary structure, monomer.

Its function is as follows. Oxygen-binding protein. May be involved in a storage mechanism or for delivery to oxygen-requiring enzymes. The oxygen-binding site contains two iron atoms. The chain is Bacteriohemerythrin from Methylococcus capsulatus (strain ATCC 33009 / NCIMB 11132 / Bath).